The chain runs to 680 residues: Pescadillo homolog (680 aa).

Positions 310 to 330 (LDQAKDEQTAETTEESSDTID) are disordered. Residues 351 to 470 (QAGSLFAPFT…KLVRPDLYSP (120 aa)) form the BRCT domain. The segment at 472–680 (ATLPPHLSPW…RRKLEKGAAK (209 aa)) is disordered. Positions 496 to 523 (AEQEEEGEAEMAEDSDEEMEEAADEKSK) form a coiled coil. Residues 497-518 (EQEEEGEAEMAEDSDEEMEEAA) are compositionally biased toward acidic residues. Basic and acidic residues predominate over residues 519 to 529 (DEKSKTASKDE). Acidic residues-rich tracts occupy residues 530 to 543 (AESE…DESV) and 551 to 585 (GTDD…DEEE). A compositionally biased stretch (basic and acidic residues) spans 586 to 596 (VARTQHQKELE). Residues 613–680 (ASKKKASQAK…RRKLEKGAAK (68 aa)) adopt a coiled-coil conformation. Over residues 616–628 (KKASQAKKIAAKK) the composition is skewed to basic residues. Basic and acidic residues predominate over residues 629–639 (RKEEEEIERQK).

It belongs to the pescadillo family. In terms of assembly, component of the NOP7 complex, composed of erb1, nop7 and ytm1. The complex is held together by erb1, which interacts with nop7 via its N-terminal domain and with ytm1 via a high-affinity interaction between the seven-bladed beta-propeller domains of the 2 proteins. The NOP7 complex associates with the 66S pre-ribosome.

It is found in the nucleus. The protein localises to the nucleolus. Its subcellular location is the nucleoplasm. In terms of biological role, component of the NOP7 complex, which is required for maturation of the 25S and 5.8S ribosomal RNAs and formation of the 60S ribosome. This Aspergillus clavatus (strain ATCC 1007 / CBS 513.65 / DSM 816 / NCTC 3887 / NRRL 1 / QM 1276 / 107) protein is Pescadillo homolog (nop7).